The sequence spans 80 residues: DNA-directed RNA polymerase RPB10 homolog (80 aa).

4 residues coordinate Zn(2+): Cys7, Cys10, Cys65, and Cys66.

This sequence belongs to the archaeal RpoN/eukaryotic RPB10 RNA polymerase subunit family. Part of the viral DNA-directed RNA polymerase that consists of 8 polII-like subunits (RPB1, RPB2, RPB3, RPB5, RPB6, RPB7, RPB9, RPB10), a capping enzyme and a termination factor.

Its subcellular location is the host cytoplasm. Component of the DNA-directed RNA polymerase (RNAP) that catalyzes the transcription in the cytoplasm of viral DNA into RNA using the four ribonucleoside triphosphates as substrates. In African swine fever virus (isolate Pig/Kenya/KEN-50/1950) (ASFV), this protein is DNA-directed RNA polymerase RPB10 homolog.